The following is a 620-amino-acid chain: Membrane protein insertase YidC (620 aa).

A helical membrane pass occupies residues 7 to 27; it reads NYLIAIALSVMVVLGWQFFYM. The span at 37–58 shows a compositional bias: low complexity; the sequence is AEQAQQAQQAKTPATQATPGAA. Positions 37–77 are disordered; it reads AEQAQQAQQAKTPATQATPGAAVNGALPGQTQASATTSRED. The next 4 membrane-spanning stretches (helical) occupy residues 399–419, 469–489, 514–534, and 560–580; these read FGVAILLTTIAVKLLFFPLAS, WPLLLQIPVFFALYKVIYITI, LFGLLPFESPAMLHLGIWPII, and WMPLVFTFMLGSFPAGLVIYW.

It belongs to the OXA1/ALB3/YidC family. Type 1 subfamily. As to quaternary structure, interacts with the Sec translocase complex via SecD. Specifically interacts with transmembrane segments of nascent integral membrane proteins during membrane integration.

It localises to the cell inner membrane. In terms of biological role, required for the insertion and/or proper folding and/or complex formation of integral membrane proteins into the membrane. Involved in integration of membrane proteins that insert both dependently and independently of the Sec translocase complex, as well as at least some lipoproteins. Aids folding of multispanning membrane proteins. The sequence is that of Membrane protein insertase YidC from Allorhizobium ampelinum (strain ATCC BAA-846 / DSM 112012 / S4) (Agrobacterium vitis (strain S4)).